The chain runs to 1372 residues: DNA-directed RNA polymerase subunit beta' (1372 aa).

C69, C71, C84, and C87 together coordinate Zn(2+). Mg(2+) is bound by residues D460, D462, and D464. Zn(2+)-binding residues include C808, C882, C889, and C892.

The protein belongs to the RNA polymerase beta' chain family. As to quaternary structure, the RNAP catalytic core consists of 2 alpha, 1 beta, 1 beta' and 1 omega subunit. When a sigma factor is associated with the core the holoenzyme is formed, which can initiate transcription. Requires Mg(2+) as cofactor. The cofactor is Zn(2+).

It carries out the reaction RNA(n) + a ribonucleoside 5'-triphosphate = RNA(n+1) + diphosphate. Functionally, DNA-dependent RNA polymerase catalyzes the transcription of DNA into RNA using the four ribonucleoside triphosphates as substrates. This is DNA-directed RNA polymerase subunit beta' from Rickettsia akari (strain Hartford).